The primary structure comprises 344 residues: Uroporphyrinogen decarboxylase (344 aa).

Substrate is bound by residues 27–31 (RQAGR), Phe46, Asp77, Tyr153, Thr208, and His324.

Belongs to the uroporphyrinogen decarboxylase family. As to quaternary structure, homodimer.

It localises to the cytoplasm. It carries out the reaction uroporphyrinogen III + 4 H(+) = coproporphyrinogen III + 4 CO2. It functions in the pathway porphyrin-containing compound metabolism; protoporphyrin-IX biosynthesis; coproporphyrinogen-III from 5-aminolevulinate: step 4/4. Catalyzes the decarboxylation of four acetate groups of uroporphyrinogen-III to yield coproporphyrinogen-III. The protein is Uroporphyrinogen decarboxylase of Bradyrhizobium diazoefficiens (strain JCM 10833 / BCRC 13528 / IAM 13628 / NBRC 14792 / USDA 110).